A 252-amino-acid polypeptide reads, in one-letter code: 5'-nucleotidase SurE (252 aa).

A divalent metal cation contacts are provided by Asp-8, Asp-9, Ser-39, and Asn-95.

It belongs to the SurE nucleotidase family. It depends on a divalent metal cation as a cofactor.

It is found in the cytoplasm. It carries out the reaction a ribonucleoside 5'-phosphate + H2O = a ribonucleoside + phosphate. Its function is as follows. Nucleotidase that shows phosphatase activity on nucleoside 5'-monophosphates. The protein is 5'-nucleotidase SurE of Clostridium botulinum (strain Kyoto / Type A2).